The sequence spans 180 residues: Ubiquitin-conjugating enzyme E2 20 (180 aa).

The segment at 1–33 (MAAVNGYQGNTPADPPASNGSKQPAAPTKTVDS) is disordered. Residues 35-180 (SVLKRLQSEL…VEKLYKPPSA (146 aa)) form the UBC core domain. Cys119 serves as the catalytic Glycyl thioester intermediate.

Belongs to the ubiquitin-conjugating enzyme family. In terms of tissue distribution, expressed in all tissues with cell division activities and in mature leaves.

The enzyme catalyses S-ubiquitinyl-[E1 ubiquitin-activating enzyme]-L-cysteine + [E2 ubiquitin-conjugating enzyme]-L-cysteine = [E1 ubiquitin-activating enzyme]-L-cysteine + S-ubiquitinyl-[E2 ubiquitin-conjugating enzyme]-L-cysteine.. It participates in protein modification; protein ubiquitination. Accepts the ubiquitin from the E1 complex and catalyzes its covalent attachment to other proteins. The sequence is that of Ubiquitin-conjugating enzyme E2 20 (UBC20) from Arabidopsis thaliana (Mouse-ear cress).